A 267-amino-acid polypeptide reads, in one-letter code: Indole-3-glycerol phosphate synthase (267 aa).

The protein belongs to the TrpC family.

It carries out the reaction 1-(2-carboxyphenylamino)-1-deoxy-D-ribulose 5-phosphate + H(+) = (1S,2R)-1-C-(indol-3-yl)glycerol 3-phosphate + CO2 + H2O. The protein operates within amino-acid biosynthesis; L-tryptophan biosynthesis; L-tryptophan from chorismate: step 4/5. The sequence is that of Indole-3-glycerol phosphate synthase from Deinococcus radiodurans (strain ATCC 13939 / DSM 20539 / JCM 16871 / CCUG 27074 / LMG 4051 / NBRC 15346 / NCIMB 9279 / VKM B-1422 / R1).